A 607-amino-acid polypeptide reads, in one-letter code: Fucose-1-phosphate guanylyltransferase (607 aa).

The segment at 1–21 (MRAVRRGLREGGAMAAARDPP) is disordered.

In terms of tissue distribution, expressed in many tissues.

The protein resides in the cytoplasm. The catalysed reaction is beta-L-fucose 1-phosphate + GTP + H(+) = GDP-beta-L-fucose + diphosphate. Its function is as follows. Catalyzes the formation of GDP-L-fucose from GTP and L-fucose-1-phosphate. Functions as a salvage pathway to reutilize L-fucose arising from the turnover of glycoproteins and glycolipids. The polypeptide is Fucose-1-phosphate guanylyltransferase (Homo sapiens (Human)).